Here is a 364-residue protein sequence, read N- to C-terminus: tRNA 2-selenouridine synthase (364 aa).

The 124-residue stretch at 14 to 137 (LIADTPIIDV…LRQTAIQATI (124 aa)) folds into the Rhodanese domain. The S-selanylcysteine intermediate role is filled by C97.

Belongs to the SelU family. In terms of assembly, monomer.

It carries out the reaction 5-methylaminomethyl-2-thiouridine(34) in tRNA + selenophosphate + (2E)-geranyl diphosphate + H2O + H(+) = 5-methylaminomethyl-2-selenouridine(34) in tRNA + (2E)-thiogeraniol + phosphate + diphosphate. The catalysed reaction is 5-methylaminomethyl-2-thiouridine(34) in tRNA + (2E)-geranyl diphosphate = 5-methylaminomethyl-S-(2E)-geranyl-thiouridine(34) in tRNA + diphosphate. It catalyses the reaction 5-methylaminomethyl-S-(2E)-geranyl-thiouridine(34) in tRNA + selenophosphate + H(+) = 5-methylaminomethyl-2-(Se-phospho)selenouridine(34) in tRNA + (2E)-thiogeraniol. The enzyme catalyses 5-methylaminomethyl-2-(Se-phospho)selenouridine(34) in tRNA + H2O = 5-methylaminomethyl-2-selenouridine(34) in tRNA + phosphate. Involved in the post-transcriptional modification of the uridine at the wobble position (U34) of tRNA(Lys), tRNA(Glu) and tRNA(Gln). Catalyzes the conversion of 2-thiouridine (S2U-RNA) to 2-selenouridine (Se2U-RNA). Acts in a two-step process involving geranylation of 2-thiouridine (S2U) to S-geranyl-2-thiouridine (geS2U) and subsequent selenation of the latter derivative to 2-selenouridine (Se2U) in the tRNA chain. The protein is tRNA 2-selenouridine synthase of Shigella flexneri serotype 5b (strain 8401).